The following is a 431-amino-acid chain: Enolase (431 aa).

Glutamine 164 contacts (2R)-2-phosphoglycerate. The active-site Proton donor is the glutamate 206. Positions 243, 288, and 315 each coordinate Mg(2+). (2R)-2-phosphoglycerate contacts are provided by lysine 340, arginine 369, serine 370, and lysine 391. The Proton acceptor role is filled by lysine 340.

It belongs to the enolase family. It depends on Mg(2+) as a cofactor.

The protein localises to the cytoplasm. It is found in the secreted. The protein resides in the cell surface. It carries out the reaction (2R)-2-phosphoglycerate = phosphoenolpyruvate + H2O. Its pathway is carbohydrate degradation; glycolysis; pyruvate from D-glyceraldehyde 3-phosphate: step 4/5. In terms of biological role, catalyzes the reversible conversion of 2-phosphoglycerate (2-PG) into phosphoenolpyruvate (PEP). It is essential for the degradation of carbohydrates via glycolysis. This chain is Enolase, found in Fervidobacterium nodosum (strain ATCC 35602 / DSM 5306 / Rt17-B1).